The following is a 403-amino-acid chain: 4-hydroxy-3-methylbut-2-en-1-yl diphosphate synthase (flavodoxin) (403 aa).

Over residues 1–16 the composition is skewed to basic and acidic residues; sequence MNTENPIEKPFRKTGD. The disordered stretch occupies residues 1–31; sequence MNTENPIEKPFRKTGDPVDLTSESPLHPRRK. [4Fe-4S] cluster contacts are provided by C291, C294, C326, and E333.

The protein belongs to the IspG family. It depends on [4Fe-4S] cluster as a cofactor.

The catalysed reaction is (2E)-4-hydroxy-3-methylbut-2-enyl diphosphate + oxidized [flavodoxin] + H2O + 2 H(+) = 2-C-methyl-D-erythritol 2,4-cyclic diphosphate + reduced [flavodoxin]. It functions in the pathway isoprenoid biosynthesis; isopentenyl diphosphate biosynthesis via DXP pathway; isopentenyl diphosphate from 1-deoxy-D-xylulose 5-phosphate: step 5/6. In terms of biological role, converts 2C-methyl-D-erythritol 2,4-cyclodiphosphate (ME-2,4cPP) into 1-hydroxy-2-methyl-2-(E)-butenyl 4-diphosphate. The chain is 4-hydroxy-3-methylbut-2-en-1-yl diphosphate synthase (flavodoxin) from Bifidobacterium longum (strain NCC 2705).